The chain runs to 544 residues: Probable protein kinase UbiB (544 aa).

A Protein kinase domain is found at 123 to 501 (DFDIKPLASA…KRQQAKGQFL (379 aa)). ATP-binding positions include 129–137 (LASASIAQV) and Lys-152. Asp-287 acts as the Proton acceptor in catalysis. The helical transmembrane segment at 515–537 (LLTSNITVLASISAATGAAFWLF) threads the bilayer.

It belongs to the ABC1 family. UbiB subfamily.

Its subcellular location is the cell inner membrane. It functions in the pathway cofactor biosynthesis; ubiquinone biosynthesis [regulation]. Functionally, is probably a protein kinase regulator of UbiI activity which is involved in aerobic coenzyme Q (ubiquinone) biosynthesis. The polypeptide is Probable protein kinase UbiB (Aliivibrio fischeri (strain ATCC 700601 / ES114) (Vibrio fischeri)).